Reading from the N-terminus, the 1163-residue chain is Actin cross-linking toxin VgrG1 (1163 aa).

An ACD domain is found at 728–1163 (TPDFPTHFPK…NPQEWQRIIA (436 aa)). 739–743 (SIGIE) contacts ATP. 2 residues coordinate Mg(2+): E743 and E805. S808 lines the ATP pocket. Residue Q889 coordinates Mg(2+). Residue R995 coordinates ATP. E1066 is a binding site for Mg(2+).

Belongs to the VgrG protein family. As to quaternary structure, interacts with protein VC1417. Requires Mg(2+) as cofactor.

The protein resides in the secreted. It is found in the host cytoplasm. It localises to the host cytosol. In terms of biological role, part of the type VI secretion system (T6SS) specialized secretion system, which delivers several virulence factors in both prokaryotic and eukaryotic cells during infection. Forms the spike at the tip of the elongating tube probably formed by hemolysin co-regulated protein/Hcp. Allows the delivery of the TseL antibacterial toxin to target cells where it exerts its toxicity. Also acts directly as an actin-directed toxin that catalyzes the covalent cross-linking of host cytoplasmic monomeric actin. Mediates the cross-link between 'Lys-50' of one monomer and 'Glu-270' of another actin monomer, resulting in formation of highly toxic actin oligomers that cause cell rounding. The toxin can be highly efficient at very low concentrations by acting on formin homology family proteins: toxic actin oligomers bind with high affinity to formins and adversely affect both nucleation and elongation abilities of formins, causing their potent inhibition in both profilin-dependent and independent manners. Acts as an acid--amino-acid ligase that transfers the gamma-phosphoryl group of ATP to the 'Glu-270' actin residue, resulting in the formation of an activated acyl phosphate intermediate. This intermediate is further hydrolyzed and the energy of hydrolysis is utilized for the formation of the amide bond between actin subunits. The chain is Actin cross-linking toxin VgrG1 from Vibrio cholerae serotype O1 (strain ATCC 39315 / El Tor Inaba N16961).